The chain runs to 116 residues: Probable prefoldin subunit 2 (116 aa).

The protein belongs to the prefoldin subunit beta family. Heterohexamer of two PFD-alpha type and four PFD-beta type subunits.

Its function is as follows. Binds specifically to cytosolic chaperonin (c-CPN) and transfers target proteins to it. Binds to nascent polypeptide chain and promotes folding in an environment in which there are many competing pathways for nonnative proteins. The chain is Probable prefoldin subunit 2 (pfdn2) from Dictyostelium discoideum (Social amoeba).